Here is a 199-residue protein sequence, read N- to C-terminus: Pyridoxine/pyridoxamine 5'-phosphate oxidase (199 aa).

FMN contacts are provided by residues 44 to 49 (RTVLLK), 59 to 60 (YT), Lys-66, and Gln-91. Substrate is bound at residue Lys-49. Substrate is bound by residues Tyr-109, Arg-113, and Ser-117. FMN contacts are provided by residues 126–127 (QS) and Trp-171. Residue 177–179 (RLH) coordinates substrate. Residue Arg-181 participates in FMN binding.

It belongs to the pyridoxamine 5'-phosphate oxidase family. In terms of assembly, homodimer. Requires FMN as cofactor.

The enzyme catalyses pyridoxamine 5'-phosphate + O2 + H2O = pyridoxal 5'-phosphate + H2O2 + NH4(+). The catalysed reaction is pyridoxine 5'-phosphate + O2 = pyridoxal 5'-phosphate + H2O2. Its pathway is cofactor metabolism; pyridoxal 5'-phosphate salvage; pyridoxal 5'-phosphate from pyridoxamine 5'-phosphate: step 1/1. The protein operates within cofactor metabolism; pyridoxal 5'-phosphate salvage; pyridoxal 5'-phosphate from pyridoxine 5'-phosphate: step 1/1. In terms of biological role, catalyzes the oxidation of either pyridoxine 5'-phosphate (PNP) or pyridoxamine 5'-phosphate (PMP) into pyridoxal 5'-phosphate (PLP). The chain is Pyridoxine/pyridoxamine 5'-phosphate oxidase from Xanthomonas axonopodis pv. citri (strain 306).